The chain runs to 228 residues: Claudin-10 (228 aa).

Residues 1–21 (MASTASEIIAFMVSISGWVLV) form a helical membrane-spanning segment. At 22–80 (SSTLPTDYWKVSTIDGTVITTATYWANLWKACVTDSTGVSNCKDFPSMLALDGYIQACR) the chain is on the extracellular side. A helical membrane pass occupies residues 81 to 101 (GLMIAAVSLGFFGSIFALFGM). Topologically, residues 102 to 115 (KCTKVGGSDKAKAK) are cytoplasmic. The helical transmembrane segment at 116–136 (IACLAGIVFILSGLCSMTGCS) threads the bilayer. Over 137 to 160 (LYANKITTEFFDPLFVEQKYELGA) the chain is Extracellular. The helical transmembrane segment at 161 to 181 (ALFIGWAGASLCIIGGVIFCF) threads the bilayer. At 182-228 (SISDNNKTPRYTYNGATSVMSSRTKYHGGEDFKTTNPSKQFDKNAYV) the chain is on the cytoplasmic side.

It belongs to the claudin family. As to quaternary structure, can form homodimers both in trans (interaction between CLDN10 molecules in opposing membranes) and in cis (interaction between CLDN10 molecules within one membrane). In terms of assembly, interacts with CLDN19. In terms of tissue distribution, expressed in the kidney, eccrine sweat glands and in all layers of the epidermis. In the kidney, it is detected in the thick ascending limb of Henle's loop (TAL). In the sweat glands, it is expressed in cells from secretory portions, corresponding to the clear cells.

The protein resides in the cell junction. Its subcellular location is the tight junction. The protein localises to the cell membrane. It carries out the reaction Na(+)(in) = Na(+)(out). It catalyses the reaction Li(+)(in) = Li(+)(out). The catalysed reaction is K(+)(in) = K(+)(out). The enzyme catalyses Rb(+)(in) = Rb(+)(out). It carries out the reaction Cs(+)(in) = Cs(+)(out). It catalyses the reaction NH4(+)(in) = NH4(+)(out). The catalysed reaction is methylamine(out) = methylamine(in). The enzyme catalyses Mg(2+)(in) = Mg(2+)(out). It carries out the reaction Ca(2+)(in) = Ca(2+)(out). It catalyses the reaction Sr(2+)(in) = Sr(2+)(out). The catalysed reaction is chloride(in) = chloride(out). The enzyme catalyses nitrate(in) = nitrate(out). Its function is as follows. Forms paracellular channels: polymerizes in tight junction strands with cation- and anion-selective channels through the strands, conveying epithelial permeability in a process known as paracellular tight junction permeability. In terms of biological role, forms cation-selective paracellular channels. In sweat glands and in the thick ascending limb (TAL) of Henle's loop in kidney, it controls paracellular sodium permeability which is essential for proper sweat production and renal function. Functionally, forms anion-selective paracellular channels. In renal proximal tubules, it conveys selective chloride over hydrogencarbonate anion permeability which is required for renal chloride reabsorption and salt homeostasis. The sequence is that of Claudin-10 from Homo sapiens (Human).